The sequence spans 339 residues: Glycerol-3-phosphate dehydrogenase [NAD(P)+] (339 aa).

Residues S15, Y16, H36, and K110 each contribute to the NADPH site. Positions 110, 139, and 141 each coordinate sn-glycerol 3-phosphate. A143 lines the NADPH pocket. Positions 195, 248, 258, 259, and 260 each coordinate sn-glycerol 3-phosphate. The active-site Proton acceptor is K195. R259 provides a ligand contact to NADPH. The NADPH site is built by V283 and E285.

Belongs to the NAD-dependent glycerol-3-phosphate dehydrogenase family.

It localises to the cytoplasm. It catalyses the reaction sn-glycerol 3-phosphate + NAD(+) = dihydroxyacetone phosphate + NADH + H(+). The catalysed reaction is sn-glycerol 3-phosphate + NADP(+) = dihydroxyacetone phosphate + NADPH + H(+). The protein operates within membrane lipid metabolism; glycerophospholipid metabolism. Its function is as follows. Catalyzes the reduction of the glycolytic intermediate dihydroxyacetone phosphate (DHAP) to sn-glycerol 3-phosphate (G3P), the key precursor for phospholipid synthesis. The chain is Glycerol-3-phosphate dehydrogenase [NAD(P)+] from Escherichia coli O17:K52:H18 (strain UMN026 / ExPEC).